The chain runs to 391 residues: Elongation factor Tu 2 (391 aa).

The region spanning 10-201 (KPHVNIGTIG…EVDNYIPTPE (192 aa)) is the tr-type G domain. The segment at 19-26 (GHVDHGKT) is G1. 19-26 (GHVDHGKT) is a GTP binding site. Threonine 26 serves as a coordination point for Mg(2+). The interval 55-59 (GITIS) is G2. The G3 stretch occupies residues 76 to 79 (DCPG). GTP is bound by residues 76–80 (DCPGH) and 131–134 (NKVD). The G4 stretch occupies residues 131–134 (NKVD). The G5 stretch occupies residues 169–171 (SAL).

This sequence belongs to the TRAFAC class translation factor GTPase superfamily. Classic translation factor GTPase family. EF-Tu/EF-1A subfamily. In terms of assembly, monomer.

It localises to the cytoplasm. It carries out the reaction GTP + H2O = GDP + phosphate + H(+). GTP hydrolase that promotes the GTP-dependent binding of aminoacyl-tRNA to the A-site of ribosomes during protein biosynthesis. The polypeptide is Elongation factor Tu 2 (Bartonella quintana (strain Toulouse) (Rochalimaea quintana)).